The following is a 774-amino-acid chain: Cilium assembly protein DZIP1L (774 aa).

A C2H2-type zinc finger spans residues 166–189; it reads HTCHLCDKTFMNATFLRGHIQRRH. Residues 204 to 450 adopt a coiled-coil conformation; the sequence is LGEVLEELRA…RKVLAALRKN (247 aa). Disordered stretches follow at residues 415 to 435, 515 to 674, and 686 to 774; these read MPKA…ASLE, NKEV…ASSG, and KQLE…IPGW. The span at 421 to 433 shows a compositional bias: acidic residues; that stretch reads TEEDSSEEELEAS. 2 positions are modified to phosphoserine: S425 and S426. Basic and acidic residues predominate over residues 515–526; sequence NKEVSSRVKQRW. Over residues 597-616 the composition is skewed to low complexity; the sequence is GPSSTPVSPGSGLSSTPPFS.

Belongs to the DZIP C2H2-type zinc-finger protein family. Interacts with SEPTIN2.

Its subcellular location is the cytoplasm. The protein localises to the cytoskeleton. It is found in the cilium basal body. It localises to the microtubule organizing center. The protein resides in the centrosome. Its subcellular location is the centriole. Involved in primary cilium formation. Probably acts as a transition zone protein required for localization of PKD1/PC1 and PKD2/PC2 to the ciliary membrane. The chain is Cilium assembly protein DZIP1L from Mus musculus (Mouse).